Reading from the N-terminus, the 92-residue chain is Probable Fe(2+)-trafficking protein (92 aa).

Belongs to the Fe(2+)-trafficking protein family.

Could be a mediator in iron transactions between iron acquisition and iron-requiring processes, such as synthesis and/or repair of Fe-S clusters in biosynthetic enzymes. The sequence is that of Probable Fe(2+)-trafficking protein from Shewanella oneidensis (strain ATCC 700550 / JCM 31522 / CIP 106686 / LMG 19005 / NCIMB 14063 / MR-1).